A 491-amino-acid polypeptide reads, in one-letter code: Trigger factor (491 aa).

In terms of domain architecture, PPIase FKBP-type spans 169–254 (GDRVTIDYLG…VKDVAAAAPI (86 aa)). The segment at 434 to 491 (KVSKEELTAEDDADEKPAKKTASKKKAAAKADAAEGEEAAAPKRKAPAKKKASDESAE) is disordered. Residues 452-461 (KKTASKKKAA) show a composition bias toward basic residues.

It belongs to the FKBP-type PPIase family. Tig subfamily.

The protein resides in the cytoplasm. It catalyses the reaction [protein]-peptidylproline (omega=180) = [protein]-peptidylproline (omega=0). Its function is as follows. Involved in protein export. Acts as a chaperone by maintaining the newly synthesized protein in an open conformation. Functions as a peptidyl-prolyl cis-trans isomerase. This chain is Trigger factor, found in Sinorhizobium medicae (strain WSM419) (Ensifer medicae).